Reading from the N-terminus, the 195-residue chain is Putative C-P lyase subunit protein HtxG (195 aa).

Belongs to the PhnH family.

In terms of biological role, belongs to an operon involved in hypophosphite oxidation. Exact function not known. The sequence is that of Putative C-P lyase subunit protein HtxG (htxG) from Stutzerimonas stutzeri (Pseudomonas stutzeri).